Reading from the N-terminus, the 84-residue chain is GTP cyclohydrolase 1 feedback regulatory protein (84 aa).

Belongs to the GFRP family. In terms of assembly, homopentamer. Forms a complex with GCH1 where a GCH1 homodecamer is sandwiched by two GFRP homopentamers.

It is found in the nucleus. The protein resides in the nucleus membrane. It localises to the cytoplasm. The protein localises to the cytosol. Its function is as follows. Mediates tetrahydrobiopterin inhibition of GTP cyclohydrolase 1. The polypeptide is GTP cyclohydrolase 1 feedback regulatory protein (gchfr) (Xenopus laevis (African clawed frog)).